Reading from the N-terminus, the 117-residue chain is MHEYSIVSALIEQCEQHALANHAAKITRVDIKLGVMSGVEPSLLQTAFDTFKLDSICKAAQLNIQIQPLVILCQDCQSESVLSERTVVCPTCQSYRTRVLDGEDMLLMQLEMEQDED.

His2 contacts Ni(2+). Cys73, Cys76, Cys89, and Cys92 together coordinate Zn(2+).

This sequence belongs to the HypA/HybF family.

Functionally, involved in the maturation of [NiFe] hydrogenases. Required for nickel insertion into the metal center of the hydrogenase. The sequence is that of Hydrogenase maturation factor HypA from Shewanella baltica (strain OS185).